The primary structure comprises 183 residues: TATA-box-binding protein (183 aa).

A run of 2 repeats spans residues 7 to 83 (IENV…ARTL) and 99 to 177 (VQNI…RQQL).

This sequence belongs to the TBP family.

General factor that plays a role in the activation of archaeal genes transcribed by RNA polymerase. Binds specifically to the TATA box promoter element which lies close to the position of transcription initiation. The chain is TATA-box-binding protein from Methanothrix thermoacetophila (strain DSM 6194 / JCM 14653 / NBRC 101360 / PT) (Methanosaeta thermophila).